A 351-amino-acid chain; its full sequence is tRNA pseudouridine synthase D (351 aa).

Residue Asp81 is the Nucleophile of the active site. The TRUD domain occupies 158–304 (GVPNYFGSQR…MRHERRAIEL (147 aa)).

This sequence belongs to the pseudouridine synthase TruD family.

The enzyme catalyses uridine(13) in tRNA = pseudouridine(13) in tRNA. In terms of biological role, responsible for synthesis of pseudouridine from uracil-13 in transfer RNAs. The sequence is that of tRNA pseudouridine synthase D from Aliivibrio fischeri (strain MJ11) (Vibrio fischeri).